The following is a 206-amino-acid chain: High frequency lysogenization protein HflD homolog (206 aa).

This sequence belongs to the HflD family.

It is found in the cytoplasm. The protein resides in the cell inner membrane. The protein is High frequency lysogenization protein HflD homolog of Pseudomonas paraeruginosa (strain DSM 24068 / PA7) (Pseudomonas aeruginosa (strain PA7)).